Reading from the N-terminus, the 177-residue chain is MAIKSRIRTIPDYPKKGIMFRDITTLLKDPVGFRLVIDQLSQHYIENGVDFDMIVGMEARGFIIGGALSYTLGKGFVPIRKPGKLPGEVVDQEYQLEYGTDKVEMHIDALEKGSRVLLVDDLLATGGTAMAGASLVEKVGGVIAEMAFIVNLPDIGGQKKLEEKGYKLFCLTEFEGE.

The protein belongs to the purine/pyrimidine phosphoribosyltransferase family. Homodimer.

It localises to the cytoplasm. It carries out the reaction AMP + diphosphate = 5-phospho-alpha-D-ribose 1-diphosphate + adenine. It functions in the pathway purine metabolism; AMP biosynthesis via salvage pathway; AMP from adenine: step 1/1. Its function is as follows. Catalyzes a salvage reaction resulting in the formation of AMP, that is energically less costly than de novo synthesis. The protein is Adenine phosphoribosyltransferase of Chlorobium phaeobacteroides (strain BS1).